The chain runs to 160 residues: Cyclic pyranopterin monophosphate synthase (160 aa).

Substrate is bound by residues 73-75 (LCH) and 110-111 (ME). Aspartate 125 is a catalytic residue.

The protein belongs to the MoaC family. In terms of assembly, homohexamer; trimer of dimers.

The catalysed reaction is (8S)-3',8-cyclo-7,8-dihydroguanosine 5'-triphosphate = cyclic pyranopterin phosphate + diphosphate. It functions in the pathway cofactor biosynthesis; molybdopterin biosynthesis. In terms of biological role, catalyzes the conversion of (8S)-3',8-cyclo-7,8-dihydroguanosine 5'-triphosphate to cyclic pyranopterin monophosphate (cPMP). This chain is Cyclic pyranopterin monophosphate synthase, found in Pseudomonas paraeruginosa (strain DSM 24068 / PA7) (Pseudomonas aeruginosa (strain PA7)).